Consider the following 339-residue polypeptide: Glycerol-3-phosphate dehydrogenase [NAD(P)+] (339 aa).

S15, Y16, H36, and K110 together coordinate NADPH. Positions 110, 139, and 141 each coordinate sn-glycerol 3-phosphate. A143 contributes to the NADPH binding site. Residues K195, D248, S258, R259, and N260 each coordinate sn-glycerol 3-phosphate. K195 acts as the Proton acceptor in catalysis. R259 provides a ligand contact to NADPH. NADPH is bound by residues V283 and E285.

This sequence belongs to the NAD-dependent glycerol-3-phosphate dehydrogenase family.

It localises to the cytoplasm. It carries out the reaction sn-glycerol 3-phosphate + NAD(+) = dihydroxyacetone phosphate + NADH + H(+). The enzyme catalyses sn-glycerol 3-phosphate + NADP(+) = dihydroxyacetone phosphate + NADPH + H(+). The protein operates within membrane lipid metabolism; glycerophospholipid metabolism. Catalyzes the reduction of the glycolytic intermediate dihydroxyacetone phosphate (DHAP) to sn-glycerol 3-phosphate (G3P), the key precursor for phospholipid synthesis. In Shigella boydii serotype 18 (strain CDC 3083-94 / BS512), this protein is Glycerol-3-phosphate dehydrogenase [NAD(P)+].